Consider the following 103-residue polypeptide: Heme-copper oxidase subunit 4 (103 aa).

3 consecutive transmembrane segments (helical) span residues 20 to 40, 42 to 62, and 75 to 95; these read VWIV…EGIA, NPFV…ALFF, and ITVS…TSVL.

Its subcellular location is the cell membrane. This chain is Heme-copper oxidase subunit 4 (aoxC), found in Aeropyrum pernix (strain ATCC 700893 / DSM 11879 / JCM 9820 / NBRC 100138 / K1).